Here is a 91-residue protein sequence, read N- to C-terminus: Large ribosomal subunit protein bL27 (91 aa).

It belongs to the bacterial ribosomal protein bL27 family. As to quaternary structure, part of the 50S ribosomal subunit. Contacts protein L18.

Its function is as follows. Binds the 5S and 23S rRNAs and also the tRNA in the P site. This Deinococcus radiodurans (strain ATCC 13939 / DSM 20539 / JCM 16871 / CCUG 27074 / LMG 4051 / NBRC 15346 / NCIMB 9279 / VKM B-1422 / R1) protein is Large ribosomal subunit protein bL27 (rpmA).